Here is a 300-residue protein sequence, read N- to C-terminus: DNA repair protein PprA (300 aa).

Threonine 88 carries the post-translational modification Phosphothreonine. Serine 128 is subject to Phosphoserine. Phosphothreonine is present on threonine 160.

Post-translationally, phosphorylated by RqkA in vitro. Phosphorylated primarily at Thr-88, and to a little extent at Ser-128 and Thr-160.

Its activity is regulated as follows. Phosphorylation increases DNA binding affinity. Functionally, dsDNA-binding protein that contributes to the ionizing radiation resistance of D.radiodurans. Plays a role in DNA repair and genome reconstitution, and is necessary for recovery from severe genomic fragmentation as a result of exposure to severe levels of ionizing radiation. In vitro, binds to double-stranded DNA carrying strand breaks and stimulates the DNA end-joining reaction catalyzed by DNA ligases. Thus, PprA plays a critical role in a non-homologous end-joining (NHEJ) pathway for the repair of radiation-induced DNA double-strands breaks. Cannot bind to dsDNA without strand breaks or single-stranded DNA. The sequence is that of DNA repair protein PprA (pprA) from Deinococcus radiodurans (strain ATCC 13939 / DSM 20539 / JCM 16871 / CCUG 27074 / LMG 4051 / NBRC 15346 / NCIMB 9279 / VKM B-1422 / R1).